We begin with the raw amino-acid sequence, 78 residues long: Small ribosomal subunit protein bS18c (78 aa).

Belongs to the bacterial ribosomal protein bS18 family. Part of the 30S ribosomal subunit.

Its subcellular location is the plastid. It is found in the chloroplast. This is Small ribosomal subunit protein bS18c from Oltmannsiellopsis viridis (Marine flagellate).